The sequence spans 495 residues: ATP synthase subunit beta, chloroplastic (495 aa).

172–179 (GGAGVGKT) provides a ligand contact to ATP.

This sequence belongs to the ATPase alpha/beta chains family. As to quaternary structure, F-type ATPases have 2 components, CF(1) - the catalytic core - and CF(0) - the membrane proton channel. CF(1) has five subunits: alpha(3), beta(3), gamma(1), delta(1), epsilon(1). CF(0) has four main subunits: a(1), b(1), b'(1) and c(9-12).

The protein resides in the plastid. The protein localises to the chloroplast thylakoid membrane. The catalysed reaction is ATP + H2O + 4 H(+)(in) = ADP + phosphate + 5 H(+)(out). In terms of biological role, produces ATP from ADP in the presence of a proton gradient across the membrane. The catalytic sites are hosted primarily by the beta subunits. In Eucomis bicolor (King's flower), this protein is ATP synthase subunit beta, chloroplastic.